The sequence spans 152 residues: Deoxyuridine 5'-triphosphate nucleotidohydrolase (152 aa).

Residues 71–73, Asn-84, 88–90, and Met-98 each bind substrate; these read RSG and LID.

It belongs to the dUTPase family. Mg(2+) is required as a cofactor.

The enzyme catalyses dUTP + H2O = dUMP + diphosphate + H(+). It participates in pyrimidine metabolism; dUMP biosynthesis; dUMP from dCTP (dUTP route): step 2/2. Its function is as follows. This enzyme is involved in nucleotide metabolism: it produces dUMP, the immediate precursor of thymidine nucleotides and it decreases the intracellular concentration of dUTP so that uracil cannot be incorporated into DNA. The protein is Deoxyuridine 5'-triphosphate nucleotidohydrolase of Shewanella baltica (strain OS155 / ATCC BAA-1091).